The following is a 475-amino-acid chain: Aspartyl/glutamyl-tRNA(Asn/Gln) amidotransferase subunit B (475 aa).

The protein belongs to the GatB/GatE family. GatB subfamily. In terms of assembly, heterotrimer of A, B and C subunits.

The catalysed reaction is L-glutamyl-tRNA(Gln) + L-glutamine + ATP + H2O = L-glutaminyl-tRNA(Gln) + L-glutamate + ADP + phosphate + H(+). It catalyses the reaction L-aspartyl-tRNA(Asn) + L-glutamine + ATP + H2O = L-asparaginyl-tRNA(Asn) + L-glutamate + ADP + phosphate + 2 H(+). Its function is as follows. Allows the formation of correctly charged Asn-tRNA(Asn) or Gln-tRNA(Gln) through the transamidation of misacylated Asp-tRNA(Asn) or Glu-tRNA(Gln) in organisms which lack either or both of asparaginyl-tRNA or glutaminyl-tRNA synthetases. The reaction takes place in the presence of glutamine and ATP through an activated phospho-Asp-tRNA(Asn) or phospho-Glu-tRNA(Gln). The polypeptide is Aspartyl/glutamyl-tRNA(Asn/Gln) amidotransferase subunit B (Bacillus cereus (strain ATCC 10987 / NRS 248)).